Reading from the N-terminus, the 865-residue chain is Leucine-rich repeat-containing protein 66 (865 aa).

The chain crosses the membrane as a helical span at residues 4–24 (FYARVTVMVTGLCFVGTVTNP). Asparagine 42 carries an N-linked (GlcNAc...) asparagine glycan. 5 LRR repeats span residues 138 to 160 (RLKV…WKLK), 161 to 182 (PLCS…GFHG), 185 to 206 (QLKS…AFKG), 209 to 230 (KLQV…VTIA), and 235 to 255 (NLEL…ANFQ). Asparagine 248 is a glycosylation site (N-linked (GlcNAc...) asparagine). A helical transmembrane segment spans residues 366–386 (ALAVCLSVFITFVVAFCLGAF). 2 disordered regions span residues 463-522 (RMLG…PGQH) and 654-749 (DTPS…AESV). Positions 470–479 (MDPSSQQSPG) are enriched in polar residues. Basic and acidic residues predominate over residues 675–688 (AVQRDASFDPHDDL). Residues 702 to 713 (FTLSSEGSQDTR) show a composition bias toward polar residues. A phosphoserine mark is found at serine 714 and serine 748. Positions 728-759 (SQPLPSRNLGEYKDSVTSAESVEDITSQQTLE) constitute an LRRNT domain. Asparagine 787 is a glycosylation site (N-linked (GlcNAc...) asparagine). Positions 840 to 865 (FPNIDSSPSPPCSDQDPSDPEEHDTK) are disordered. The span at 855–865 (DPSDPEEHDTK) shows a compositional bias: acidic residues.

It localises to the membrane. The polypeptide is Leucine-rich repeat-containing protein 66 (Lrrc66) (Rattus norvegicus (Rat)).